Here is a 124-residue protein sequence, read N- to C-terminus: Calvin cycle protein CP12-1, chloroplastic (124 aa).

Residues M1–A47 constitute a chloroplast transit peptide. Intrachain disulfides connect C68–C77 and C110–C119. A disordered region spans residues A90–N124. Positions P105–T116 are enriched in acidic residues.

This sequence belongs to the CP12 family. In terms of assembly, monomer. Component of a complex that contains two dimers of PRK, two tetramers of GAPDH and CP12. CP12 associates with GAPDH, causing its conformation to change. This GAPDH/CP12 complex binds PRK to form a half-complex (one unit). This unit probably dimerizes due partially to interactions between the enzymes of each unit. Post-translationally, contains two disulfide bonds; only the oxidized protein, with two disulfide bonds, is active in complex formation. The C-terminal disulfide is involved in the interaction with GAPDH and the N-terminal disulfide mediates the binding of PRK with this binary complex. As to expression, mostly expressed in flowers, hypocotyl, cotyledons, leaves, stems, and flower stalks. Barely detectable in roots and siliques. Present in root tips and lateral roots. Accumulates in the cotyledons of etiolated seedlings.

Its subcellular location is the plastid. The protein resides in the chloroplast. In terms of biological role, acts as a linker essential in the assembly of a core complex of PRK/GAPDH. Coordinates the reversible inactivation of chloroplast enzymes GAPDH and PRK during darkness in photosynthetic tissues. The polypeptide is Calvin cycle protein CP12-1, chloroplastic (CP12-1) (Arabidopsis thaliana (Mouse-ear cress)).